The primary structure comprises 461 residues: 3-oxoacyl-[acyl-carrier-protein] synthase, mitochondrial (461 aa).

The N-terminal 28 residues, 1–28, are a transit peptide targeting the mitochondrion; sequence MATSNLRRHLSASRLRLNRFISTSSSYH. Residues 30–460 form the Ketosynthase family 3 (KS3) domain; sequence HRRVVVTGLG…GTNASLLFAS (431 aa). Active-site for beta-ketoacyl synthase activity residues include Cys209, His350, and His389.

This sequence belongs to the thiolase-like superfamily. Beta-ketoacyl-ACP synthases family. As to quaternary structure, homodimer. In terms of tissue distribution, expressed at the same level in leaves, roots, siliques and flowers.

It localises to the mitochondrion. It catalyses the reaction a fatty acyl-[ACP] + malonyl-[ACP] + H(+) = a 3-oxoacyl-[ACP] + holo-[ACP] + CO2. The catalysed reaction is butanoyl-[ACP] + malonyl-[ACP] + H(+) = 3-oxohexanoyl-[ACP] + holo-[ACP] + CO2. The enzyme catalyses hexanoyl-[ACP] + malonyl-[ACP] + H(+) = 3-oxooctanoyl-[ACP] + holo-[ACP] + CO2. It carries out the reaction octanoyl-[ACP] + malonyl-[ACP] + H(+) = 3-oxodecanoyl-[ACP] + holo-[ACP] + CO2. It catalyses the reaction decanoyl-[ACP] + malonyl-[ACP] + H(+) = 3-oxododecanoyl-[ACP] + holo-[ACP] + CO2. The catalysed reaction is dodecanoyl-[ACP] + malonyl-[ACP] + H(+) = 3-oxotetradecanoyl-[ACP] + holo-[ACP] + CO2. The enzyme catalyses tetradecanoyl-[ACP] + malonyl-[ACP] + H(+) = 3-oxohexadecanoyl-[ACP] + holo-[ACP] + CO2. It carries out the reaction hexadecanoyl-[ACP] + malonyl-[ACP] + H(+) = 3-oxooctadecanoyl-[ACP] + holo-[ACP] + CO2. Its pathway is lipid metabolism; fatty acid biosynthesis. Inhibited by cerulenin. Its function is as follows. Catalyzes all the condensation reaction of fatty acid synthesis by the addition to an acyl acceptor of two carbons from malonyl-ACP. Able to elongate saturated acyl chains from 4 to at least 16 carbons. Uses malonyl-CoA but not acetyl-CoA as primer substrate. When expressed in a heterologous system, reveals a bimodal distribution of products, with peaks at C8 and C14-C16. The major product of the reaction (octanoyl-ACP) is required for the lipoylation of essential mitochondrial proteins. Required for mitochondrial fatty acid synthesis (mtFAS). MtFAS are essential for photorespiration and plant development, probably by influencing mitochondrial membrane lipid composition and other lipid metabolic pathways. The chain is 3-oxoacyl-[acyl-carrier-protein] synthase, mitochondrial from Arabidopsis thaliana (Mouse-ear cress).